We begin with the raw amino-acid sequence, 416 residues long: Homeobox protein ceh-62 (416 aa).

Positions 103–113 (TPTPIIATPSI) are enriched in low complexity. 2 disordered regions span residues 103–144 (TPTP…QATR) and 178–247 (FQNR…FPPT). Polar residues predominate over residues 118 to 127 (QPLQSPSAPN). The homeobox DNA-binding region spans 130 to 189 (SRRKRTTFSPEQATRLEAEYIGDSYMAREKRHLLAQSLKLSENQVKTWFQNRRAKDKRDR). A compositionally biased stretch (low complexity) spans 193–218 (NASNHTSNSRRSSPSRKSSSDSTPTP). A compositionally biased stretch (polar residues) spans 219–240 (TQATQFDMPTQIQTASPPTTAD).

The protein resides in the nucleus. The protein is Homeobox protein ceh-62 of Caenorhabditis elegans.